We begin with the raw amino-acid sequence, 224 residues long: DeSI-like protein At4g17486 (224 aa).

Residues Thr-26–Ile-163 enclose the PPPDE domain. Active-site residues include His-51 and Cys-125. Residues Glu-176 to Ile-201 form a disordered region.

The protein belongs to the DeSI family.

The protein is DeSI-like protein At4g17486 of Arabidopsis thaliana (Mouse-ear cress).